A 122-amino-acid chain; its full sequence is Large ribosomal subunit protein uL14c (122 aa).

The protein belongs to the universal ribosomal protein uL14 family. In terms of assembly, part of the 50S ribosomal subunit.

It localises to the plastid. In terms of biological role, binds to 23S rRNA. The protein is Large ribosomal subunit protein uL14c (rpl14) of Helicosporidium sp. subsp. Simulium jonesii (Green alga).